We begin with the raw amino-acid sequence, 2201 residues long: RNA-directed RNA polymerase L (2201 aa).

Residues 26–285 (KNIMLAQTQI…VCSKSVEYTF (260 aa)) are endonuclease. Mn(2+) contacts are provided by glutamate 51, aspartate 88, and glutamate 101. Lysine 114 is a catalytic residue. Positions 1156-1352 (LDMKSVVRQS…FLSDRLNKFV (197 aa)) constitute a RdRp catalytic domain. Position 1312 (aspartate 1312) interacts with Mg(2+).

It belongs to the Bunyavirales RNA polymerase family. In terms of assembly, homomultimer; the oligomeric structure is essential for the polymerase activity. Interacts with nucleoprotein N. Interacts with protein Z; this interaction inhibits viral transcription and replication, Z partially blocks the product exit tunnel for the releasing nascent RNA product. Mn(2+) serves as cofactor. It depends on Mg(2+) as a cofactor.

It localises to the virion. The protein localises to the host cytoplasm. It carries out the reaction RNA(n) + a ribonucleoside 5'-triphosphate = RNA(n+1) + diphosphate. Its function is as follows. RNA-dependent RNA polymerase, which is responsible for the replication and transcription of the viral RNA genome using antigenomic RNA as an intermediate. During transcription, synthesizes subgenomic RNAs and assures their capping by a cap-snatching mechanism, which involves the endonuclease activity cleaving the host capped pre-mRNAs. These short capped RNAs are then used as primers for viral transcription. The 3'-end of subgenomic mRNAs molecules are heterogeneous and not polyadenylated. The replicase function is to direct synthesis of antigenomic and genomic RNA which are encapsidated and non capped. As a consequence of the use of the same enzyme for both transcription and replication, these mechanisms need to be well coordinated. These processes may be regulated by proteins N and Z in a dose-dependent manner. Z protein inhibits the viral polymerase L und thus the viral transcription and RNA synthesis. The polypeptide is RNA-directed RNA polymerase L (Oecomys bicolor (Bicolored arboreal rice rat)).